Consider the following 453-residue polypeptide: Adenylyltransferase and sulfurtransferase MOCS3 (453 aa).

Phosphothreonine is present on Thr-62. Residues Gly-101, Asp-122, 129-133 (SNFHR), Lys-146, and 190-191 (DN) each bind ATP. The Zn(2+) site is built by Cys-231 and Cys-234. Cys-248 serves as the catalytic Glycyl thioester intermediate; for adenylyltransferase activity. The Zn(2+) site is built by Cys-306 and Cys-309. The Rhodanese domain maps to 355–451 (QAQPHLLIDV…WTNSVDPSFP (97 aa)). The Cysteine persulfide intermediate; for sulfurtransferase activity role is filled by Cys-410.

The protein in the N-terminal section; belongs to the HesA/MoeB/ThiF family. UBA4 subfamily. Zn(2+) is required as a cofactor.

Its subcellular location is the cytoplasm. It localises to the cytosol. The enzyme catalyses [molybdopterin-synthase sulfur-carrier protein]-C-terminal Gly-Gly + ATP + H(+) = [molybdopterin-synthase sulfur-carrier protein]-C-terminal Gly-Gly-AMP + diphosphate. It carries out the reaction [molybdopterin-synthase sulfur-carrier protein]-C-terminal Gly-Gly-AMP + S-sulfanyl-L-cysteinyl-[cysteine desulfurase] + AH2 = [molybdopterin-synthase sulfur-carrier protein]-C-terminal-Gly-aminoethanethioate + L-cysteinyl-[cysteine desulfurase] + A + AMP + 2 H(+). The protein operates within tRNA modification; 5-methoxycarbonylmethyl-2-thiouridine-tRNA biosynthesis. It functions in the pathway cofactor biosynthesis; molybdopterin biosynthesis. Its function is as follows. Plays a central role in 2-thiolation of mcm(5)S(2)U at tRNA wobble positions of cytosolic tRNA(Lys), tRNA(Glu) and tRNA(Gln). Also essential during biosynthesis of the molybdenum cofactor. Acts by mediating the C-terminal thiocarboxylation of sulfur carriers URM1 and MOCS2A. Its N-terminus first activates URM1 and MOCS2A as acyl-adenylates (-COAMP), then the persulfide sulfur on the catalytic cysteine is transferred to URM1 and MOCS2A to form thiocarboxylation (-COSH) of their C-terminus. The reaction probably involves hydrogen sulfide that is generated from the persulfide intermediate and that acts as a nucleophile towards URM1 and MOCS2A. Subsequently, a transient disulfide bond is formed. Does not use thiosulfate as sulfur donor; NFS1 probably acting as a sulfur donor for thiocarboxylation reactions. This is Adenylyltransferase and sulfurtransferase MOCS3 from Drosophila yakuba (Fruit fly).